A 235-amino-acid chain; its full sequence is MIFNVLTIFPDMFPGPLGYSTVGNALRKGLWSLNVVDIRSFASDKHSTVDDKPYGGGPGMLMKADVLGRCIDSVLEAHPDTRLVYTSPKGKQFTQDMSRQIVHFGNITLLCGRFEGIDERVVDVYNFQEVSIGDYVISGGELAAMVVIDSCVRMVTGVIGNKDSLTRESFDCGLEYPQYTRPASWKGVSVPDVLLRGNHKETELWRCKMSRIITERRRPDLLKDCGGEEEGSSNE.

S-adenosyl-L-methionine-binding positions include Gly-112 and 132–137; that span reads IGDYVI.

The protein belongs to the RNA methyltransferase TrmD family. Homodimer.

The protein localises to the cytoplasm. The enzyme catalyses guanosine(37) in tRNA + S-adenosyl-L-methionine = N(1)-methylguanosine(37) in tRNA + S-adenosyl-L-homocysteine + H(+). Specifically methylates guanosine-37 in various tRNAs. The polypeptide is tRNA (guanine-N(1)-)-methyltransferase (Anaplasma marginale (strain Florida)).